The following is a 606-amino-acid chain: NADH-ubiquinone oxidoreductase chain 5 (606 aa).

Helical transmembrane passes span 3–23 (VINLIPTLMLTSLIILTLPII), 38–58 (ITKTAVTYAFAISLIPTLLFI), 87–107 (FFSLTFMPIALFITWSIMEFS), 124–144 (LLLFLITMLILVSANNLLQLF), 180–200 (IGDMGFIMMMAWFTIHLNSWE), 216–236 (LLGLLLASAGKSAQFGLHPWL), 244–264 (TPVSALLHSSTMVMAGVFTLI), 276–296 (IQTSTLCLGAITTLFTAICAL), 304–323 (IIALSTSSQLGLMMVTIGIN), 328–350 (AFIHMCTHAFFKAMLFLSSGSII), 369–389 (MPITSTAIIIGSLALTGMPFL), 404–424 (MSYINTWALLITLIAVSMTAS), 460–480 (LILGSIFMGFLISMNTIPHTT), 483–503 (MTMPPHLKFMALAVTLLGFTV), and 586–606 (LMKLYFLSFLLSITLGLLIAL).

It belongs to the complex I subunit 5 family. In terms of assembly, core subunit of respiratory chain NADH dehydrogenase (Complex I) which is composed of 45 different subunits.

The protein resides in the mitochondrion inner membrane. It catalyses the reaction a ubiquinone + NADH + 5 H(+)(in) = a ubiquinol + NAD(+) + 4 H(+)(out). In terms of biological role, core subunit of the mitochondrial membrane respiratory chain NADH dehydrogenase (Complex I) which catalyzes electron transfer from NADH through the respiratory chain, using ubiquinone as an electron acceptor. Essential for the catalytic activity and assembly of complex I. This is NADH-ubiquinone oxidoreductase chain 5 (MT-ND5) from Loxodonta africana (African elephant).